We begin with the raw amino-acid sequence, 565 residues long: CTP synthase (565 aa).

The interval 1 to 268 (MQTKYIFVTG…GELVVDRFYP (268 aa)) is amidoligase domain. A CTP-binding site is contributed by serine 14. Serine 14 contacts UTP. 15-20 (SLGKGI) serves as a coordination point for ATP. Tyrosine 55 contacts L-glutamine. Aspartate 72 contributes to the ATP binding site. The Mg(2+) site is built by aspartate 72 and glutamate 142. CTP contacts are provided by residues 149-151 (DIE), 189-194 (KTKPTQ), and lysine 225. Residues 189–194 (KTKPTQ) and lysine 225 contribute to the UTP site. The Glutamine amidotransferase type-1 domain maps to 301–543 (PIALVGKYVE…VRACTAYAHE (243 aa)). Glycine 363 is a binding site for L-glutamine. Catalysis depends on cysteine 390, which acts as the Nucleophile; for glutamine hydrolysis. Residues 391-394 (LGLQ), glutamate 414, and arginine 471 contribute to the L-glutamine site. Active-site residues include histidine 516 and glutamate 518. A disordered region spans residues 545–565 (DLVTSPQPPERKAVPLASVDM).

It belongs to the CTP synthase family. Homotetramer.

It catalyses the reaction UTP + L-glutamine + ATP + H2O = CTP + L-glutamate + ADP + phosphate + 2 H(+). The catalysed reaction is L-glutamine + H2O = L-glutamate + NH4(+). The enzyme catalyses UTP + NH4(+) + ATP = CTP + ADP + phosphate + 2 H(+). The protein operates within pyrimidine metabolism; CTP biosynthesis via de novo pathway; CTP from UDP: step 2/2. With respect to regulation, allosterically activated by GTP, when glutamine is the substrate; GTP has no effect on the reaction when ammonia is the substrate. The allosteric effector GTP functions by stabilizing the protein conformation that binds the tetrahedral intermediate(s) formed during glutamine hydrolysis. Inhibited by the product CTP, via allosteric rather than competitive inhibition. In terms of biological role, catalyzes the ATP-dependent amination of UTP to CTP with either L-glutamine or ammonia as the source of nitrogen. Regulates intracellular CTP levels through interactions with the four ribonucleotide triphosphates. This Salinibacter ruber (strain DSM 13855 / M31) protein is CTP synthase.